Here is a 222-residue protein sequence, read N- to C-terminus: PKHD-type hydroxylase Syncc9902_2001 (222 aa).

The region spanning 80-174 is the Fe2OG dioxygenase domain; that stretch reads RVHSILISRS…RLVCVGWIES (95 aa). Fe cation-binding residues include His98, Asp100, and His155. Arg165 contacts 2-oxoglutarate.

Requires Fe(2+) as cofactor. It depends on L-ascorbate as a cofactor.

This chain is PKHD-type hydroxylase Syncc9902_2001, found in Synechococcus sp. (strain CC9902).